The sequence spans 209 residues: UPF0174 protein jhp_1493 (209 aa).

Belongs to the UPF0174 family.

This chain is UPF0174 protein jhp_1493, found in Helicobacter pylori (strain J99 / ATCC 700824) (Campylobacter pylori J99).